We begin with the raw amino-acid sequence, 250 residues long: 5'-nucleotidase SurE (250 aa).

Residues Asp-8, Asp-9, Ser-39, and Asn-91 each contribute to the a divalent metal cation site.

It belongs to the SurE nucleotidase family. The cofactor is a divalent metal cation.

The protein localises to the cytoplasm. It carries out the reaction a ribonucleoside 5'-phosphate + H2O = a ribonucleoside + phosphate. Its function is as follows. Nucleotidase that shows phosphatase activity on nucleoside 5'-monophosphates. This chain is 5'-nucleotidase SurE, found in Leptospira interrogans serogroup Icterohaemorrhagiae serovar copenhageni (strain Fiocruz L1-130).